The following is a 634-amino-acid chain: DNA-directed RNA polymerase subunit gamma (634 aa).

4 residues coordinate Zn(2+): Cys74, Cys76, Cys89, and Cys92. Residues Asp471, Asp473, and Asp475 each contribute to the Mg(2+) site.

This sequence belongs to the RNA polymerase beta' chain family. RpoC1 subfamily. As to quaternary structure, in cyanobacteria the RNAP catalytic core is composed of 2 alpha, 1 beta, 1 beta', 1 gamma and 1 omega subunit. When a sigma factor is associated with the core the holoenzyme is formed, which can initiate transcription. Mg(2+) is required as a cofactor. The cofactor is Zn(2+).

It catalyses the reaction RNA(n) + a ribonucleoside 5'-triphosphate = RNA(n+1) + diphosphate. Its function is as follows. DNA-dependent RNA polymerase catalyzes the transcription of DNA into RNA using the four ribonucleoside triphosphates as substrates. This is DNA-directed RNA polymerase subunit gamma from Prochlorococcus marinus (strain MIT 9215).